We begin with the raw amino-acid sequence, 1449 residues long: DNA polymerase III PolC-type (1449 aa).

The tract at residues 194-231 (AQEKPVKKESSDNKHKSNGGNKGGYEKKSYKDEPKNEN) is disordered. Composition is skewed to basic and acidic residues over residues 197-208 (KPVKKESSDNKH) and 217-229 (GYEKKSYKDEPKN). Positions 435–590 (YVVFDIETTG…DDAKATAEIL (156 aa)) constitute an Exonuclease domain.

The protein belongs to the DNA polymerase type-C family. PolC subfamily.

It is found in the cytoplasm. The catalysed reaction is DNA(n) + a 2'-deoxyribonucleoside 5'-triphosphate = DNA(n+1) + diphosphate. Its function is as follows. Required for replicative DNA synthesis. This DNA polymerase also exhibits 3' to 5' exonuclease activity. This Clostridium perfringens (strain 13 / Type A) protein is DNA polymerase III PolC-type.